A 425-amino-acid chain; its full sequence is Trigger factor (425 aa).

The 86-residue stretch at 163–248 folds into the PPIase FKBP-type domain; sequence GDTAVIDFEG…VHEIKTKELP (86 aa).

This sequence belongs to the FKBP-type PPIase family. Tig subfamily.

It localises to the cytoplasm. It catalyses the reaction [protein]-peptidylproline (omega=180) = [protein]-peptidylproline (omega=0). Its function is as follows. Involved in protein export. Acts as a chaperone by maintaining the newly synthesized protein in an open conformation. Functions as a peptidyl-prolyl cis-trans isomerase. This Bacillus cereus (strain Q1) protein is Trigger factor.